A 1349-amino-acid chain; its full sequence is ABC multidrug transporter mdr1 (1349 aa).

The segment at 1 to 62 is disordered; the sequence is MPAPETGASS…PDGKQKDHGK (62 aa). Positions 35 to 45 are enriched in basic and acidic residues; that stretch reads DNEKPHDHHSL. Transmembrane regions (helical) follow at residues 108–128, 162–182, 234–254, and 257–277; these read ILII…LPLF, YFVY…VGFI, KVGL…VAYV, and WKLA…MGGG. An ABC transmembrane type-1 1 domain is found at 112-402; it reads LVSAICAIAA…VAPNGQAFTN (291 aa). Asparagine 308 carries an N-linked (GlcNAc...) asparagine glycan. Helical transmembrane passes span 339–359 and 371–391; these read ILGM…GLGF and VNVG…FSLG. An ABC transporter 1 domain is found at 437–682; that stretch reads IEFRNVKHIY…KGTYYKLVEA (246 aa). An ATP-binding site is contributed by 472–479; it reads GPSGSGKS. The next 2 helical transmembrane spans lie at 779–799 and 828–848; these read MLIG…QAFL and FFVV…AFAI. In terms of domain architecture, ABC transmembrane type-1 2 spans 780-1069; the sequence is LIGLTFSFLA…VFSFAPDMGK (290 aa). Residues asparagine 878 and asparagine 893 are each glycosylated (N-linked (GlcNAc...) asparagine). The next 4 membrane-spanning stretches (helical) occupy residues 896-916, 926-948, 1016-1036, and 1043-1063; these read GVSG…GAAM, LALV…FYML, ALVF…LGHH, and FFVC…VFSF. The ABC transporter 2 domain occupies 1104–1342; that stretch reads IEFRDVHFRY…KGRYYELVNL (239 aa). N-linked (GlcNAc...) asparagine glycosylation occurs at asparagine 1126. Position 1139–1146 (1139–1146) interacts with ATP; sequence GPSGCGKS.

This sequence belongs to the ABC transporter superfamily. ABCB family. Multidrug resistance exporter (TC 3.A.1.201) subfamily.

The protein resides in the cell membrane. The catalysed reaction is voriconazole(in) + ATP + H2O = voriconazole(out) + ADP + phosphate + H(+). Functionally, pleiotropic ABC efflux transporter that may be involved in A.fumigatus adaptation to azoles such as vorizonazole. The chain is ABC multidrug transporter mdr1 from Aspergillus fumigatus (strain ATCC MYA-4609 / CBS 101355 / FGSC A1100 / Af293) (Neosartorya fumigata).